A 942-amino-acid chain; its full sequence is Leucine--tRNA ligase (942 aa).

The 'HIGH' region signature appears at proline 41–histidine 51. The 'KMSKS' region motif lies at lysine 633–serine 637. Lysine 636 contacts ATP.

Belongs to the class-I aminoacyl-tRNA synthetase family.

The protein localises to the cytoplasm. The catalysed reaction is tRNA(Leu) + L-leucine + ATP = L-leucyl-tRNA(Leu) + AMP + diphosphate. The protein is Leucine--tRNA ligase of Methanocaldococcus jannaschii (strain ATCC 43067 / DSM 2661 / JAL-1 / JCM 10045 / NBRC 100440) (Methanococcus jannaschii).